The primary structure comprises 114 residues: T cell receptor beta variable 6-6 (114 aa).

The signal sequence occupies residues 1 to 21 (MSISLLCCAAFPLLWAGPVNA). Residues 22-114 (GVTQTPKFRI…TSVYFCASSY (93 aa)) form the Ig-like domain. Cysteines 42 and 110 form a disulfide. Asn84 carries an N-linked (GlcNAc...) asparagine glycan.

In terms of assembly, alpha-beta TR is a heterodimer composed of an alpha and beta chain; disulfide-linked. The alpha-beta TR is associated with the transmembrane signaling CD3 coreceptor proteins to form the TR-CD3 (TcR or TCR). The assembly of alpha-beta TR heterodimers with CD3 occurs in the endoplasmic reticulum where a single alpha-beta TR heterodimer associates with one CD3D-CD3E heterodimer, one CD3G-CD3E heterodimer and one CD247 homodimer forming a stable octameric structure. CD3D-CD3E and CD3G-CD3E heterodimers preferentially associate with TR alpha and TR beta chains, respectively. The association of the CD247 homodimer is the last step of TcR assembly in the endoplasmic reticulum and is required for transport to the cell surface.

The protein localises to the cell membrane. V region of the variable domain of T cell receptor (TR) beta chain that participates in the antigen recognition. Alpha-beta T cell receptors are antigen specific receptors which are essential to the immune response and are present on the cell surface of T lymphocytes. Recognize peptide-major histocompatibility (MH) (pMH) complexes that are displayed by antigen presenting cells (APC), a prerequisite for efficient T cell adaptive immunity against pathogens. Binding of alpha-beta TR to pMH complex initiates TR-CD3 clustering on the cell surface and intracellular activation of LCK that phosphorylates the ITAM motifs of CD3G, CD3D, CD3E and CD247 enabling the recruitment of ZAP70. In turn ZAP70 phosphorylates LAT, which recruits numerous signaling molecules to form the LAT signalosome. The LAT signalosome propagates signal branching to three major signaling pathways, the calcium, the mitogen-activated protein kinase (MAPK) kinase and the nuclear factor NF-kappa-B (NF-kB) pathways, leading to the mobilization of transcription factors that are critical for gene expression and essential for T cell growth and differentiation. The T cell repertoire is generated in the thymus, by V-(D)-J rearrangement. This repertoire is then shaped by intrathymic selection events to generate a peripheral T cell pool of self-MH restricted, non-autoaggressive T cells. Post-thymic interaction of alpha-beta TR with the pMH complexes shapes TR structural and functional avidity. In Homo sapiens (Human), this protein is T cell receptor beta variable 6-6.